Here is a 367-residue protein sequence, read N- to C-terminus: Nociceptin receptor (367 aa).

Residues Met-1–Leu-45 are Extracellular-facing. Asn-21, Asn-26, and Asn-36 each carry an N-linked (GlcNAc...) asparagine glycan. The chain crosses the membrane as a helical span at residues Gly-46–Tyr-71. Topologically, residues Val-72–Asn-84 are cytoplasmic. A helical transmembrane segment spans residues Ile-85–Thr-106. Topologically, residues Asp-107–Lys-121 are extracellular. Residues Cys-120 and Cys-197 are joined by a disulfide bond. Residues Thr-122 to Val-143 traverse the membrane as a helical segment. Residues Asp-144–Ser-162 are Cytoplasmic-facing. Residues Lys-163 to Met-185 traverse the membrane as a helical segment. At Gly-186 to Trp-208 the chain is on the extracellular side. A helical membrane pass occupies residues Gly-209–Ser-233. The Cytoplasmic portion of the chain corresponds to Leu-234–Leu-261. The chain crosses the membrane as a helical span at residues Val-262 to Val-282. The Extracellular segment spans residues Gln-283 to Ile-297. A helical membrane pass occupies residues Leu-298–Leu-319. The Cytoplasmic portion of the chain corresponds to Asp-320–Ala-367. A lipid anchor (S-palmitoyl cysteine) is attached at Cys-331.

Belongs to the G-protein coupled receptor 1 family. Post-translationally, phosphorylation at Ser-360 requires GRK3. In terms of tissue distribution, in the brain, isoform KOR3 and isoform KOR3C are most abundant in hypothalamus and periaqueductal gray. Isoform KOR3A is highly expressed in cortex, striatum and brainstem. Isoform KOR3D is highly expressed in cerebellum, hypothalamus and brainstem. Detected in spleen lymphocytes.

It is found in the cell membrane. The protein localises to the cytoplasmic vesicle. In terms of biological role, G-protein coupled opioid receptor that functions as a receptor for the endogenous neuropeptide nociceptin. Ligand binding causes a conformation change that triggers signaling via guanine nucleotide-binding proteins (G proteins) and modulates the activity of down-stream effectors. Signaling via G proteins mediates inhibition of adenylate cyclase activity and calcium channel activity. Arrestins modulate signaling via G proteins and mediate the activation of alternative signaling pathways that lead to the activation of MAP kinases. Plays a role in modulating nociception and the perception of pain. Plays a role in the regulation of locomotor activity by the neuropeptide nociceptin. The chain is Nociceptin receptor (Oprl1) from Mus musculus (Mouse).